The following is a 432-amino-acid chain: Glutamate-1-semialdehyde 2,1-aminomutase 2 (432 aa).

The residue at position 268 (Lys268) is an N6-(pyridoxal phosphate)lysine.

It belongs to the class-III pyridoxal-phosphate-dependent aminotransferase family. HemL subfamily. As to quaternary structure, homodimer. Pyridoxal 5'-phosphate is required as a cofactor.

The protein resides in the cytoplasm. It carries out the reaction (S)-4-amino-5-oxopentanoate = 5-aminolevulinate. The protein operates within porphyrin-containing compound metabolism; protoporphyrin-IX biosynthesis; 5-aminolevulinate from L-glutamyl-tRNA(Glu): step 2/2. This Listeria monocytogenes serovar 1/2a (strain ATCC BAA-679 / EGD-e) protein is Glutamate-1-semialdehyde 2,1-aminomutase 2.